Reading from the N-terminus, the 577-residue chain is Aspartate--tRNA(Asp/Asn) ligase (577 aa).

Residue Glu171 coordinates L-aspartate. Residues Gln195–Lys198 form an aspartate region. Arg217 contributes to the L-aspartate binding site. Residues Arg217–Glu219 and Gln226 each bind ATP. L-aspartate is bound at residue His444. Position 474 (Glu474) interacts with ATP. L-aspartate is bound at residue Arg481. An ATP-binding site is contributed by Gly526 to Arg529.

It belongs to the class-II aminoacyl-tRNA synthetase family. Type 1 subfamily. As to quaternary structure, homodimer.

The protein localises to the cytoplasm. It carries out the reaction tRNA(Asx) + L-aspartate + ATP = L-aspartyl-tRNA(Asx) + AMP + diphosphate. Functionally, aspartyl-tRNA synthetase with relaxed tRNA specificity since it is able to aspartylate not only its cognate tRNA(Asp) but also tRNA(Asn). Reaction proceeds in two steps: L-aspartate is first activated by ATP to form Asp-AMP and then transferred to the acceptor end of tRNA(Asp/Asn). This chain is Aspartate--tRNA(Asp/Asn) ligase, found in Helicobacter pylori (strain P12).